A 478-amino-acid chain; its full sequence is MADRDATLWASHEKMLSQPLKDSDAEVYSIIKKESNRQRVGLELIASENFASRAVLEALGSCLNNKYSEGYPGQRYYGGTEFIDELEMLCQKRALQAYHLDPQCWGVNVQPYSGSPANFAVYTALVEPHGRIMGLDLPDGGHLTHGFMTDKKKISATSIFFESMPYKVYPETGYINYDQLEENASLFHPKLIIAGTSCYSRNLDYARLRKIADDNGAYLMADMAHISGLVAAGVVPSPFEHCHVVTTTTHKTLRGCRAGMIFYRKGVRSVDPKTGKETYYELESLINSAVFPGLQGGPHNHAIAGVAVALKQAMTTEFKIYQLQVLANCRALSDALTELGYKIVTGGSDNHLILMDLRSKGTDGGRAEKVLEACSIACNKNTCPGDKSALRPSGLRLGTPALTSRGLLEEDFQKVAHFIHRGIELTLQIQSHMATKATLKEFKEKLAGDEKIQSAVATLREEVENFASNFSLPGLPDF.

Position 251 is an N6-(pyridoxal phosphate)lysine (lysine 251).

It belongs to the SHMT family. As to quaternary structure, homotetramer. Identified in complex with FAM175B and the other subunits of the BRISC complex, at least composed of FAM175B/ABRO1, BRCC3/BRCC36, BABAM2 and BABAM1/NBA1. The cofactor is pyridoxal 5'-phosphate.

The protein resides in the cytoplasm. The enzyme catalyses (6R)-5,10-methylene-5,6,7,8-tetrahydrofolate + glycine + H2O = (6S)-5,6,7,8-tetrahydrofolate + L-serine. It participates in one-carbon metabolism; tetrahydrofolate interconversion. In terms of biological role, interconversion of serine and glycine. In Mus musculus (Mouse), this protein is Serine hydroxymethyltransferase, cytosolic (Shmt1).